The primary structure comprises 227 residues: Ribose-5-phosphate isomerase A (227 aa).

Residues 26–29 (TGST), 82–85 (DGAD), and 95–98 (KGGG) contribute to the substrate site. The Proton acceptor role is filled by Glu104. Substrate is bound at residue Lys122.

The protein belongs to the ribose 5-phosphate isomerase family. Homodimer.

It catalyses the reaction aldehydo-D-ribose 5-phosphate = D-ribulose 5-phosphate. It functions in the pathway carbohydrate degradation; pentose phosphate pathway; D-ribose 5-phosphate from D-ribulose 5-phosphate (non-oxidative stage): step 1/1. In terms of biological role, catalyzes the reversible conversion of ribose-5-phosphate to ribulose 5-phosphate. The sequence is that of Ribose-5-phosphate isomerase A from Streptococcus equi subsp. zooepidemicus (strain H70).